Reading from the N-terminus, the 130-residue chain is Metastasis-suppressor KiSS-1 (130 aa).

Residues 1-19 (MISMASWQLLLLLCVATYG) form the signal peptide. A disordered region spans residues 49 to 82 (KESRYAESKPGSAGLRARRSSPCPPVEGPAGRQR). C71 and C85 are joined by a disulfide. Y110 carries the post-translational modification Phosphotyrosine. An essential for receptor binding and receptor activation region spans residues 110–119 (YNWNSFGLRY). The residue at position 119 (Y119) is a Tyrosine amide.

The protein belongs to the KISS1 family. Weak in all tissue types with highest levels in lung and 15- 17-day embryos. Expressed in areas of the hypothalamus implicated in the neuroendocrine regulation of gonadotropin secretion, including the anteroventral periventricular nucleus, the periventricular nucleus, and the arcuate nucleus.

Its subcellular location is the secreted. In terms of biological role, metastasis suppressor protein. May regulate events downstream of cell-matrix adhesion, perhaps involving cytoskeletal reorganization. Generates a C-terminally amidated peptide, metastin which functions as the endogenous ligand of the G-protein coupled receptor GPR54. Activation of the receptor inhibits cell proliferation and cell migration, key characteristics of tumor metastasis. The receptor is also essential for normal gonadotropin-released hormone physiology and for puberty. The hypothalamic KiSS1/GPR54 system is a pivotal factor in central regulation of the gonadotropic axis at puberty and in adulthood. Intracerebroventricular administration induces an increase in serum LH and FSH levels in prepubertal male and female as well as in adult animals. The protein is Metastasis-suppressor KiSS-1 (Kiss1) of Mus musculus (Mouse).